A 189-amino-acid polypeptide reads, in one-letter code: Pyridoxal 5'-phosphate synthase subunit PdxT (189 aa).

47-49 is an L-glutamine binding site; it reads GES. Catalysis depends on Cys79, which acts as the Nucleophile. Residues Arg106 and 135 to 136 each bind L-glutamine; that span reads IR. Residues His171 and Glu173 each act as charge relay system in the active site.

This sequence belongs to the glutaminase PdxT/SNO family. In the presence of PdxS, forms a dodecamer of heterodimers. Only shows activity in the heterodimer.

The enzyme catalyses aldehydo-D-ribose 5-phosphate + D-glyceraldehyde 3-phosphate + L-glutamine = pyridoxal 5'-phosphate + L-glutamate + phosphate + 3 H2O + H(+). The catalysed reaction is L-glutamine + H2O = L-glutamate + NH4(+). It functions in the pathway cofactor biosynthesis; pyridoxal 5'-phosphate biosynthesis. Its function is as follows. Catalyzes the hydrolysis of glutamine to glutamate and ammonia as part of the biosynthesis of pyridoxal 5'-phosphate. The resulting ammonia molecule is channeled to the active site of PdxS. The protein is Pyridoxal 5'-phosphate synthase subunit PdxT of Caldanaerobacter subterraneus subsp. tengcongensis (strain DSM 15242 / JCM 11007 / NBRC 100824 / MB4) (Thermoanaerobacter tengcongensis).